The sequence spans 404 residues: Tryptophan synthase beta chain (404 aa).

At Lys90 the chain carries N6-(pyridoxal phosphate)lysine.

Belongs to the TrpB family. As to quaternary structure, tetramer of two alpha and two beta chains. Pyridoxal 5'-phosphate is required as a cofactor.

It catalyses the reaction (1S,2R)-1-C-(indol-3-yl)glycerol 3-phosphate + L-serine = D-glyceraldehyde 3-phosphate + L-tryptophan + H2O. It functions in the pathway amino-acid biosynthesis; L-tryptophan biosynthesis; L-tryptophan from chorismate: step 5/5. The beta subunit is responsible for the synthesis of L-tryptophan from indole and L-serine. The sequence is that of Tryptophan synthase beta chain (trpB) from Geobacillus stearothermophilus (Bacillus stearothermophilus).